The sequence spans 209 residues: Uracil phosphoribosyltransferase (209 aa).

Residues arginine 79, arginine 104, and 131 to 139 (DPMLATGGS) contribute to the 5-phospho-alpha-D-ribose 1-diphosphate site. Uracil is bound by residues isoleucine 194 and 199–201 (GDA). Aspartate 200 is a 5-phospho-alpha-D-ribose 1-diphosphate binding site.

This sequence belongs to the UPRTase family. Requires Mg(2+) as cofactor.

It carries out the reaction UMP + diphosphate = 5-phospho-alpha-D-ribose 1-diphosphate + uracil. It participates in pyrimidine metabolism; UMP biosynthesis via salvage pathway; UMP from uracil: step 1/1. Allosterically activated by GTP. Its function is as follows. Catalyzes the conversion of uracil and 5-phospho-alpha-D-ribose 1-diphosphate (PRPP) to UMP and diphosphate. This Clostridium acetobutylicum (strain ATCC 824 / DSM 792 / JCM 1419 / IAM 19013 / LMG 5710 / NBRC 13948 / NRRL B-527 / VKM B-1787 / 2291 / W) protein is Uracil phosphoribosyltransferase.